The following is a 110-amino-acid chain: Large ribosomal subunit protein uL22 (110 aa).

Belongs to the universal ribosomal protein uL22 family. Part of the 50S ribosomal subunit.

Functionally, this protein binds specifically to 23S rRNA; its binding is stimulated by other ribosomal proteins, e.g. L4, L17, and L20. It is important during the early stages of 50S assembly. It makes multiple contacts with different domains of the 23S rRNA in the assembled 50S subunit and ribosome. In terms of biological role, the globular domain of the protein is located near the polypeptide exit tunnel on the outside of the subunit, while an extended beta-hairpin is found that lines the wall of the exit tunnel in the center of the 70S ribosome. This chain is Large ribosomal subunit protein uL22, found in Desulfotalea psychrophila (strain LSv54 / DSM 12343).